The primary structure comprises 900 residues: Zinc finger protein 574 (900 aa).

3 consecutive C2H2-type zinc fingers follow at residues 16-38, 76-98, and 126-148; these read YVCSECNQLYGSLEEVLVHQNSH, YQCLECGQLLLSPSQLLEHQELH, and YECVDCKALFASQEMWLSHRQTH. Phosphoserine is present on Ser164. The C2H2-type 4 zinc-finger motif lies at 213-235; that stretch reads YKCSECSQLFQMPADFLEHQATH. The span at 244–254 shows a compositional bias: low complexity; sequence AEPATQQETQV. Residues 244–306 are disordered; that stretch reads AEPATQQETQ…RRNNSGESGG (63 aa). Over residues 273–290 the composition is skewed to basic and acidic residues; it reads HSYELRNELRNGEAIGRD. Ser301 carries the phosphoserine modification. C2H2-type zinc fingers lie at residues 312–334, 339–361, 367–389, 395–416, 469–492, 498–520, 526–548, 554–576, 582–604, and 610–633; these read LFCSACDQLFLSPHQLQQHLRSH, FKCPLCSRVFPSPSSLDQHLGDH, FLCVDCGLAFGTEALLLAHRRAH, HSCPCGKTFVNLTKFLYHRRTH, YRCLLCSREFGKALQLTRHQRFVH, HKCSICGKMFKKKSHVRNHLRTH, FPCPDCSKPFNSPANLARHRLTH, YRCGDCGKAFTQSSTLRQHRLVH, YRCQECGVRFHRPYRLLMHRYHH, and YKCRECPRSFLLRRLLEVHQLVIH. The segment at 639 to 662 adopts a C2H2-type 15; degenerate zinc-finger fold; sequence YRCSSCGAAFPSSLRLREHRCAAA. The segment at 670-692 adopts a C2H2-type 16 zinc-finger fold; that stretch reads FECGTCGKKVGSAARLQAHEAAH. A disordered region spans residues 690–741; the sequence is AAHAAAGPGEVLAKEPPAPRASRATRTPVAPSPTALSGTTSAAPAAPARRRG. Ser721 bears the Phosphoserine mark. Residues 721-736 show a composition bias toward low complexity; the sequence is SPTALSGTTSAAPAAP. Phosphothreonine is present on Thr728. 4 consecutive C2H2-type zinc fingers follow at residues 742 to 764, 770 to 792, 798 to 820, and 826 to 848; these read PECSECKKLFSTETSLQVHRRIH, YPCPDCGKAFRQSTHLKDHRRLH, FACEVCGKAFAISMRLAEHRRIH, and YSCPDCGKSYRSFSNLWKHRKTH. The residue at position 836 (Arg836) is an Asymmetric dimethylarginine.

It belongs to the krueppel C2H2-type zinc-finger protein family.

It is found in the nucleus. Its function is as follows. May be involved in transcriptional regulation. In Mus musculus (Mouse), this protein is Zinc finger protein 574 (Znf574).